The primary structure comprises 265 residues: ETS-related transcription factor Elf-5 (265 aa).

Residues 43 to 129 (YPAFEHQTAC…FILQNIRTQG (87 aa)) enclose the PNT domain. The segment at residues 173–254 (SHLWEFVRDL…VDRRLVYKFG (82 aa)) is a DNA-binding region (ETS).

Belongs to the ETS family. As to expression, expressed exclusively in tissues with a high content of epithelial cells. Highly expressed in salivary gland, mammary gland, kidney and prostate. Weakly expressed in placenta and lung. Isoform 1 and isoform 2 are differentially expressed in different tissues. In the kidney, only isoform 1 was expressed, while prostate expressed both isoforms, with levels of isoform 2 being higher. Expression is up-regulated during keratinocyte differentiation. Several epithelial carcinoma cell lines showed lack of expression.

Its subcellular location is the nucleus. In terms of biological role, transcriptionally activator that may play a role in regulating the later stages of keratinocytes terminal differentiation. Functionally, isoform 2 binds to DNA sequences containing the consensus nucleotide core sequence GGA[AT]. Transcriptionally activates SPRR2A and the parotid gland-specific PSP promoters. This is ETS-related transcription factor Elf-5 (ELF5) from Homo sapiens (Human).